Here is a 405-residue protein sequence, read N- to C-terminus: Probable tRNA sulfurtransferase (405 aa).

In terms of domain architecture, THUMP spans 60–165 (DQVMARLSQV…REAIYLSTKT (106 aa)). Residues 183–184 (ML), 208–209 (HF), arginine 265, glycine 287, and glutamine 296 contribute to the ATP site.

It belongs to the ThiI family.

It localises to the cytoplasm. The enzyme catalyses [ThiI sulfur-carrier protein]-S-sulfanyl-L-cysteine + a uridine in tRNA + 2 reduced [2Fe-2S]-[ferredoxin] + ATP + H(+) = [ThiI sulfur-carrier protein]-L-cysteine + a 4-thiouridine in tRNA + 2 oxidized [2Fe-2S]-[ferredoxin] + AMP + diphosphate. The catalysed reaction is [ThiS sulfur-carrier protein]-C-terminal Gly-Gly-AMP + S-sulfanyl-L-cysteinyl-[cysteine desulfurase] + AH2 = [ThiS sulfur-carrier protein]-C-terminal-Gly-aminoethanethioate + L-cysteinyl-[cysteine desulfurase] + A + AMP + 2 H(+). It functions in the pathway cofactor biosynthesis; thiamine diphosphate biosynthesis. In terms of biological role, catalyzes the ATP-dependent transfer of a sulfur to tRNA to produce 4-thiouridine in position 8 of tRNAs, which functions as a near-UV photosensor. Also catalyzes the transfer of sulfur to the sulfur carrier protein ThiS, forming ThiS-thiocarboxylate. This is a step in the synthesis of thiazole, in the thiamine biosynthesis pathway. The sulfur is donated as persulfide by IscS. This chain is Probable tRNA sulfurtransferase, found in Lacticaseibacillus paracasei (strain ATCC 334 / BCRC 17002 / CCUG 31169 / CIP 107868 / KCTC 3260 / NRRL B-441) (Lactobacillus paracasei).